The chain runs to 462 residues: Argininosuccinate lyase (462 aa).

Belongs to the lyase 1 family. Argininosuccinate lyase subfamily.

The protein localises to the cytoplasm. The enzyme catalyses 2-(N(omega)-L-arginino)succinate = fumarate + L-arginine. It functions in the pathway amino-acid biosynthesis; L-arginine biosynthesis; L-arginine from L-ornithine and carbamoyl phosphate: step 3/3. In Exiguobacterium sp. (strain ATCC BAA-1283 / AT1b), this protein is Argininosuccinate lyase.